The following is a 331-amino-acid chain: tRNA N6-adenosine threonylcarbamoyltransferase (331 aa).

Residues histidine 109, histidine 113, and tyrosine 130 each coordinate Fe cation. Substrate is bound by residues tyrosine 130–glycine 134, aspartate 162, aspartate 183, and serine 262. Aspartate 290 lines the Fe cation pocket.

Belongs to the KAE1 / TsaD family. Requires Fe(2+) as cofactor.

Its subcellular location is the cytoplasm. It catalyses the reaction L-threonylcarbamoyladenylate + adenosine(37) in tRNA = N(6)-L-threonylcarbamoyladenosine(37) in tRNA + AMP + H(+). Its function is as follows. Required for the formation of a threonylcarbamoyl group on adenosine at position 37 (t(6)A37) in tRNAs that read codons beginning with adenine. Is probably involved in the transfer of the threonylcarbamoyl moiety of threonylcarbamoyl-AMP (TC-AMP) to the N6 group of A37. The polypeptide is tRNA N6-adenosine threonylcarbamoyltransferase (Saccharolobus islandicus (strain M.16.27) (Sulfolobus islandicus)).